The sequence spans 489 residues: Membrane-bound acylglycerophosphatidylinositol O-acyltransferase frj (489 aa).

3 helical membrane-spanning segments follow: residues 2 to 22, 40 to 60, and 75 to 95; these read SIDD…GSYV, VLVV…SLAL, and LVTF…DFYF. Residues N331 and H364 contribute to the active site. 2 helical membrane-spanning segments follow: residues 405–425 and 433–453; these read VIFW…FLLS and FYSS…ALGF.

Belongs to the membrane-bound acyltransferase family.

The protein resides in the membrane. It carries out the reaction a 1-acyl-sn-glycero-3-phospho-(1D-myo-inositol) + (5Z,8Z,11Z,14Z)-eicosatetraenoyl-CoA = a 1-acyl-2-(5Z,8Z,11Z,14Z-eicosatetraenoyl)-sn-glycero-3-phospho-(1D-myo-inositol) + CoA. The enzyme catalyses a 1-acyl-sn-glycero-3-phosphocholine + an acyl-CoA = a 1,2-diacyl-sn-glycero-3-phosphocholine + CoA. The catalysed reaction is (9Z)-hexadecenoyl-CoA + 1-hexadecanoyl-sn-glycero-3-phosphocholine = 1-hexadecanoyl-2-(9Z-hexadecenoyl)-sn-glycero-3-phosphocholine + CoA. It catalyses the reaction a 1-acyl-sn-glycero-3-phospho-L-serine + an acyl-CoA = a 1,2-diacyl-sn-glycero-3-phospho-L-serine + CoA. It carries out the reaction 1-(9Z-octadecenoyl)-sn-glycero-3-phospho-L-serine + (9Z)-hexadecenoyl-CoA = 1-(9Z-octadecenoyl)-2-(9Z-hexadecenoyl)-sn-glycero-3-phospho-L-serine + CoA. The enzyme catalyses a 1-acyl-sn-glycero-3-phosphoethanolamine + an acyl-CoA = a 1,2-diacyl-sn-glycero-3-phosphoethanolamine + CoA. The catalysed reaction is 1-hexadecanoyl-sn-glycero-3-phosphoethanolamine + (9Z)-hexadecenoyl-CoA = 1-hexadecanoyl-2-(9Z)-hexadecenoyl-sn-glycero-3-phosphoethanolamine + CoA. Its pathway is lipid metabolism; phospholipid metabolism. Its function is as follows. Acyltransferase that mediates the acylation of lysophospholipids to produce phospholipids (glycerophospholipids). Highest activity with lysophosphatidylinositol (1-acyl-sn-glycero-3-phospho-(1D-myo-inositol) or LPI) producing phosphatidylinositol (1,2-diacyl-sn-glycero-3-phospho-(1D-myo-inositol) or PI) (LPIAT activity), but also converts lysophosphatidylcholine (1-acyl-sn-glycero-3-phosphocholine or LPC) to phosphatidylcholine (1,2-diacyl-sn-glycero-3-phosphocholine or PC) (LPCAT activity), lysophosphatidylserine (1-acyl-2-hydroxy-sn-glycero-3-phospho-L-serine or LPS) to phosphatidylserine (1,2-diacyl-sn-glycero-3-phospho-L-serine or PS) (LPSAT activity), and lysophosphatidylethanolamine (1-acyl-sn-glycero-3-phosphoethanolamine or LPE) producing phosphatidylethanolamine (1,2-diacyl-sn-glycero-3-phosphoethanolamine or PE) (LPEAT activity). Has a preference for unsaturated fatty acid arachidonoyl-CoA ((5Z,8Z,11Z,14Z)-eicosatetraenoyl-CoA). Glycerophospholipids are important structural and functional components of cellular membrane, acyl-chain remodeling regulates the molecular species distribution of glycerophospholipids which can affect membrane fluidity and curvature. This chain is Membrane-bound acylglycerophosphatidylinositol O-acyltransferase frj, found in Drosophila melanogaster (Fruit fly).